Reading from the N-terminus, the 252-residue chain is Imidazole glycerol phosphate synthase subunit HisF (252 aa).

Catalysis depends on residues D11 and D130.

It belongs to the HisA/HisF family. Heterodimer of HisH and HisF.

Its subcellular location is the cytoplasm. The catalysed reaction is 5-[(5-phospho-1-deoxy-D-ribulos-1-ylimino)methylamino]-1-(5-phospho-beta-D-ribosyl)imidazole-4-carboxamide + L-glutamine = D-erythro-1-(imidazol-4-yl)glycerol 3-phosphate + 5-amino-1-(5-phospho-beta-D-ribosyl)imidazole-4-carboxamide + L-glutamate + H(+). The protein operates within amino-acid biosynthesis; L-histidine biosynthesis; L-histidine from 5-phospho-alpha-D-ribose 1-diphosphate: step 5/9. IGPS catalyzes the conversion of PRFAR and glutamine to IGP, AICAR and glutamate. The HisF subunit catalyzes the cyclization activity that produces IGP and AICAR from PRFAR using the ammonia provided by the HisH subunit. This is Imidazole glycerol phosphate synthase subunit HisF from Rhodospirillum rubrum (strain ATCC 11170 / ATH 1.1.1 / DSM 467 / LMG 4362 / NCIMB 8255 / S1).